A 572-amino-acid chain; its full sequence is DNA mismatch repair protein MutL (572 aa).

It belongs to the DNA mismatch repair MutL/HexB family.

Its function is as follows. This protein is involved in the repair of mismatches in DNA. It is required for dam-dependent methyl-directed DNA mismatch repair. May act as a 'molecular matchmaker', a protein that promotes the formation of a stable complex between two or more DNA-binding proteins in an ATP-dependent manner without itself being part of a final effector complex. This Dictyoglomus turgidum (strain DSM 6724 / Z-1310) protein is DNA mismatch repair protein MutL.